Here is a 131-residue protein sequence, read N- to C-terminus: Small ribosomal subunit protein uS11 (131 aa).

This sequence belongs to the universal ribosomal protein uS11 family. In terms of assembly, part of the 30S ribosomal subunit. Interacts with proteins S7 and S18. Binds to IF-3.

Its function is as follows. Located on the platform of the 30S subunit, it bridges several disparate RNA helices of the 16S rRNA. Forms part of the Shine-Dalgarno cleft in the 70S ribosome. The chain is Small ribosomal subunit protein uS11 from Exiguobacterium sibiricum (strain DSM 17290 / CCUG 55495 / CIP 109462 / JCM 13490 / 255-15).